The sequence spans 366 residues: GTP cyclohydrolase 1 type 2 homolog (366 aa).

A divalent metal cation contacts are provided by H64, H65, D102, H326, and E329.

Belongs to the GTP cyclohydrolase I type 2/NIF3 family. As to quaternary structure, homohexamer.

The chain is GTP cyclohydrolase 1 type 2 homolog from Staphylococcus epidermidis (strain ATCC 12228 / FDA PCI 1200).